Consider the following 347-residue polypeptide: Ileal sodium/bile acid cotransporter (347 aa).

Over 1-29 (MSNLTVGCLANATVCEGASCVAPESNFNA) the chain is Extracellular. N-linked (GlcNAc...) asparagine glycosylation is found at Asn3 and Asn11. A helical membrane pass occupies residues 30–50 (ILSVVLSTVLTILLALVMFSM). The Cytoplasmic portion of the chain corresponds to 51-83 (GCNVEIKKFLGHIRRPWGIFIGFLCQFGIMPLT). Residues 84-104 (GFVLAVAFGIMPIQAVVVLIM) form a helical membrane-spanning segment. Residues 105–127 (GCCPGGTASNILAYWVDGDMDLS) are Extracellular-facing. Residues 128-148 (VSMTTCSTLLALGMMPLCLYV) form a helical membrane-spanning segment. Topologically, residues 149–158 (YTKMWVDSGT) are cytoplasmic. A helical membrane pass occupies residues 159–179 (IVIPYDNIGTSLVALVVPVSI). Over 180–196 (GMFVNHKWPQKAKIILK) the chain is Extracellular. The helical transmembrane segment at 197–217 (VGSIAGAVLIVLIAVVGGILY) threads the bilayer. The Cytoplasmic segment spans residues 218–225 (QSAWIIEP). The chain crosses the membrane as a helical span at residues 226–246 (KLWIIGTIFPMAGYSLGFFLA). Residues 247 to 289 (RIAGQPWYRCRTVALETGMQNTQLCSTIVQLSFSPEDLTYVFT) are Extracellular-facing. Residues 290-310 (FPLIYSIFQIAFAAIFLGIYV) traverse the membrane as a helical segment. At 311-347 (AYRKCHGKNDAEFPDIKDTKTEPESSFHQMNGGFQPE) the chain is on the cytoplasmic side. Residues 323 to 335 (FPDIKDTKTEPES) are compositionally biased toward basic and acidic residues. Positions 323–347 (FPDIKDTKTEPESSFHQMNGGFQPE) are disordered. Ser336 is subject to Phosphoserine.

Belongs to the bile acid:sodium symporter (BASS) (TC 2.A.28) family. In terms of assembly, monomer and homodimer.

It localises to the membrane. The catalysed reaction is taurocholate(out) + 2 Na(+)(out) = taurocholate(in) + 2 Na(+)(in). It catalyses the reaction cholate(out) + 2 Na(+)(out) = cholate(in) + 2 Na(+)(in). The enzyme catalyses taurochenodeoxycholate(out) + 2 Na(+)(out) = taurochenodeoxycholate(in) + 2 Na(+)(in). It carries out the reaction tauroursodeoxycholate(out) + 2 Na(+)(out) = tauroursodeoxycholate(in) + 2 Na(+)(in). The catalysed reaction is glycocholate(out) + 2 Na(+)(out) = glycocholate(in) + 2 Na(+)(in). It catalyses the reaction tauronorcholate(out) + 2 Na(+)(out) = tauronorcholate(in) + 2 Na(+)(in). The enzyme catalyses tauroallocholate(out) + 2 Na(+)(out) = tauroallocholate(in) + 2 Na(+)(in). It carries out the reaction taurodeoxycholate(out) + 2 Na(+)(out) = taurodeoxycholate(in) + 2 Na(+)(in). The catalysed reaction is tauro-beta-muricholate(out) + 2 Na(+)(out) = tauro-beta-muricholate(in) + 2 Na(+)(in). Its function is as follows. Plays a critical role in the sodium-dependent reabsorption of bile acids from the lumen of the small intestine. Transports various bile acids, unconjugated or conjugated, such as cholate and taurocholate. Also responsible for bile acid transport in the renal proximal tubules, a salvage mechanism that helps conserve bile acids. Works collaboratively with the Na(+)-taurocholate cotransporting polypeptide (NTCP), the organic solute transporter (OST), and the bile salt export pump (BSEP), to ensure efficacious biological recycling of bile acids during enterohepatic circulation. The polypeptide is Ileal sodium/bile acid cotransporter (SLC10A2) (Oryctolagus cuniculus (Rabbit)).